Here is a 174-residue protein sequence, read N- to C-terminus: MGKITFYEDRGFQGRHYECSSDHSNLQPYLGRCNSVRVDSGCWMIYEQPNYLGPQYFLRRGDYPDYQQWMGLNDSVRSCRLIPHAGSHRLRLYEREDYRGQMIEITEDCSSLQDRFHFNEIHSLNVLEGSWVLYELPNYRGRQYLLRPGEYRRYHDWGAMNAKVGSLRRVIDIY.

2 Beta/gamma crystallin 'Greek key' domains span residues 2–40 and 41–83; these read GKITFYEDRGFQGRHYECSSDHSNLQPYLGRCNSVRVDS and GCWM…RLIP. The interval 84-87 is connecting peptide; it reads HAGS. Beta/gamma crystallin 'Greek key' domains are found at residues 88-128 and 129-171; these read HRLR…NVLE and GSWV…RRVI.

The protein belongs to the beta/gamma-crystallin family.

Functionally, crystallins are the dominant structural components of the vertebrate eye lens. This chain is Gamma-crystallin D (CRYGD), found in Bos taurus (Bovine).